Here is a 1342-residue protein sequence, read N- to C-terminus: DNA-directed RNA polymerase subunit beta (1342 aa).

Belongs to the RNA polymerase beta chain family. As to quaternary structure, the RNAP catalytic core consists of 2 alpha, 1 beta, 1 beta' and 1 omega subunit. When a sigma factor is associated with the core the holoenzyme is formed, which can initiate transcription.

The catalysed reaction is RNA(n) + a ribonucleoside 5'-triphosphate = RNA(n+1) + diphosphate. DNA-dependent RNA polymerase catalyzes the transcription of DNA into RNA using the four ribonucleoside triphosphates as substrates. The chain is DNA-directed RNA polymerase subunit beta from Enterobacter sp. (strain 638).